Consider the following 99-residue polypeptide: Acylphosphatase-2 (99 aa).

Serine 2 carries the N-acetylserine modification. Residues 9 to 99 (SVDYEVFGRV…LEYSSFNIRY (91 aa)) enclose the Acylphosphatase-like domain. Active-site residues include arginine 24 and asparagine 42. Serine 93 is modified (phosphoserine).

It belongs to the acylphosphatase family.

The catalysed reaction is an acyl phosphate + H2O = a carboxylate + phosphate + H(+). Functionally, its physiological role is not yet clear. The sequence is that of Acylphosphatase-2 (ACYP2) from Bos taurus (Bovine).